A 185-amino-acid chain; its full sequence is NEDD8-conjugating enzyme UBE2F (185 aa).

The tract at residues 1–29 is interaction with uba3; sequence MLTLASKLKREEGVRAGRTPAGSNDAAHR. The UBC core domain maps to 32–185; it reads IRDRLLIKEV…VQDFIKNYAR (154 aa). Catalysis depends on C116, which acts as the Glycyl thioester intermediate.

This sequence belongs to the ubiquitin-conjugating enzyme family. UBE2F subfamily.

It carries out the reaction [E1 NEDD8-activating enzyme]-S-[NEDD8 protein]-yl-L-cysteine + [E2 NEDD8-conjugating enzyme]-L-cysteine = [E1 NEDD8-activating enzyme]-L-cysteine + [E2 NEDD8-conjugating enzyme]-S-[NEDD8-protein]-yl-L-cysteine.. It participates in protein modification; protein neddylation. Its function is as follows. Accepts the ubiquitin-like protein NEDD8 from the UBA3-NAE1 E1 complex and catalyzes its covalent attachment to other proteins. Together with the E3 ubiquitin ligase rnf7/rbx2, specifically neddylates cullin-5 (cul5). Does not neddylate cul1, cul2, cul3, cul4a or cul4b. The polypeptide is NEDD8-conjugating enzyme UBE2F (ube2f) (Danio rerio (Zebrafish)).